A 578-amino-acid chain; its full sequence is Glucans biosynthesis protein G (578 aa).

An N-terminal signal peptide occupies residues 1-37; sequence MIVSPCIAPRIPGTRLRKAMLAGVALVGLLSAGQLWA. The interval 511-578 is disordered; that stretch reads VPVEAPKPAK…TWSYQLPADE (68 aa). Over residues 517-543 the composition is skewed to basic and acidic residues; it reads KPAKDSKQDKAAAKHAHAKAEKAKAEQ. Over residues 544–554 the composition is skewed to low complexity; sequence PAEQPAADAAS.

The protein belongs to the OpgD/OpgG family.

It is found in the periplasm. It functions in the pathway glycan metabolism; osmoregulated periplasmic glucan (OPG) biosynthesis. Its function is as follows. Involved in the biosynthesis of osmoregulated periplasmic glucans (OPGs). The polypeptide is Glucans biosynthesis protein G (Pseudomonas entomophila (strain L48)).